Reading from the N-terminus, the 82-residue chain is Consomatin Mao1 (82 aa).

Residues 1 to 22 (MQTASWVMVMMMVWITAPLSEG) form the signal peptide. Residues 23–57 (GKLNDVIRGLVPDDVTPQLILRSLFFHRPSDSVVR) constitute a propeptide that is removed on maturation. A disulfide bridge links C65 with C70. W67 carries the post-translational modification D-tryptophan. 3 positions are modified to 4-hydroxyproline: P71, P72, and P74. Positions 75–82 (WRRPNGKG) are excised as a propeptide.

The protein belongs to the conotoxin C superfamily. Consomatin family. Expressed by the venom duct.

It is found in the secreted. In terms of biological role, moderately activates human somatostatin receptors (SSTR) with a preferential activation of SSTR1 and SSTR4. In vivo, does not cause behavioral changes in mice within a few minutes of intracranial injection, but causes a progressive loss of movement thereafter. Four to five hours after injection, mice recover, even with the highest dose tested. Shows antinociception and antihyperalgesia activities in two mouse models of acute pain, most probably by acting outside the central nervous system. The protein is Consomatin Mao1 of Conus maioensis (Sea snail).